The chain runs to 322 residues: MVYVFSILELISFLIPILLSVAFLTLVERKVLGYMQFRNGPNVVGPFGLLQPFADGMKVFIKEELKPVNSSPYLFFFSPLLFLALALLLWNFMPVHTPTLDLQLSLLLVLGLSSLSVYAILGSGWASNSKYSLLGAIRAVAQTISYEISLALILLSLIIFSSSFNLTYIMNTQEFSWFSLSCLPLFYIWFVSTLAETNRAPFDLTEGESEIVSGYNVEYAGGPFVLFFIAEYANIILMNYFSVVLFLGGPSPLNNLFPISIIIVGIKTTFLFSVLWVRAAYPRFRYDQLMFLTWKSYLPLSIGALCAILALVALLGISLPLF.

Transmembrane regions (helical) follow at residues 4 to 24 (VFSI…VAFL), 73 to 93 (YLFF…WNFM), 106 to 126 (LLLV…SGWA), 150 to 170 (LALI…TYIM), 175 to 195 (FSWF…STLA), 224 to 244 (FVLF…FSVV), 257 to 277 (FPIS…VLWV), and 302 to 322 (IGAL…LPLF).

This sequence belongs to the complex I subunit 1 family.

It localises to the mitochondrion inner membrane. The enzyme catalyses a ubiquinone + NADH + 5 H(+)(in) = a ubiquinol + NAD(+) + 4 H(+)(out). Core subunit of the mitochondrial membrane respiratory chain NADH dehydrogenase (Complex I) that is believed to belong to the minimal assembly required for catalysis. Complex I functions in the transfer of electrons from NADH to the respiratory chain. The immediate electron acceptor for the enzyme is believed to be ubiquinone. In Strongylocentrotus purpuratus (Purple sea urchin), this protein is NADH-ubiquinone oxidoreductase chain 1 (ND1).